Reading from the N-terminus, the 399-residue chain is Zona occludens toxin (399 aa).

Functionally, increases the permeability of the small intestine mucosa by affecting the structure of intercellular tight junctions (zonula occludens). In Vibrio cholerae serotype O1 (strain ATCC 39315 / El Tor Inaba N16961), this protein is Zona occludens toxin (zot).